A 52-amino-acid chain; its full sequence is Large ribosomal subunit protein bL33 (52 aa).

This sequence belongs to the bacterial ribosomal protein bL33 family.

The protein is Large ribosomal subunit protein bL33 (rpmG) of Chlamydia muridarum (strain MoPn / Nigg).